The sequence spans 500 residues: Probable cytosol aminopeptidase (500 aa).

2 residues coordinate Mn(2+): Lys-265 and Asp-270. The active site involves Lys-277. Mn(2+) is bound by residues Asp-288, Asp-347, and Glu-349. Arg-351 is an active-site residue.

The protein belongs to the peptidase M17 family. Mn(2+) is required as a cofactor.

It localises to the cytoplasm. The enzyme catalyses Release of an N-terminal amino acid, Xaa-|-Yaa-, in which Xaa is preferably Leu, but may be other amino acids including Pro although not Arg or Lys, and Yaa may be Pro. Amino acid amides and methyl esters are also readily hydrolyzed, but rates on arylamides are exceedingly low.. It carries out the reaction Release of an N-terminal amino acid, preferentially leucine, but not glutamic or aspartic acids.. Its function is as follows. Presumably involved in the processing and regular turnover of intracellular proteins. Catalyzes the removal of unsubstituted N-terminal amino acids from various peptides. This chain is Probable cytosol aminopeptidase, found in Rickettsia rickettsii (strain Iowa).